Consider the following 96-residue polypeptide: Putative septation protein SpoVG (96 aa).

It belongs to the SpoVG family.

Could be involved in septation. The sequence is that of Putative septation protein SpoVG from Oceanobacillus iheyensis (strain DSM 14371 / CIP 107618 / JCM 11309 / KCTC 3954 / HTE831).